The sequence spans 291 residues: MRLRRAAATVITTGALLAAGTLGATPATAVTKPTIAAVGGYAMNNGTGTTLYTKAADTRRSTGSTTKIMTAKVVLAQSNLNLDAKVTIQKAYSDYVVANKPSQAHLIVGDKVTVRQLLYGLMLPSGCDAAYALADKYGSGSQAAARVKSFIGKMNTAATNLGLHNTHFDSFDGIGNGANYSTPRHLTKIASSAMKNSTFRTVVKTKAYTAKTVTKTGSIRTMDTWKNTNGLLSSYSGAIGVKTGSGPEAKYCLVFAATRGGKTVIGTVLASTSIPARESDATKIMNYGFAL.

The first 29 residues, 1-29 (MRLRRAAATVITTGALLAAGTLGATPATA), serve as a signal peptide directing secretion. The active-site Acyl-ester intermediate is the Ser-64. Catalysis depends on Lys-67, which acts as the Proton acceptor. Ser-125 is an active-site residue. Residue Lys-242 coordinates substrate.

Belongs to the peptidase S11 family.

The protein localises to the secreted. The catalysed reaction is Preferential cleavage: (Ac)2-L-Lys-D-Ala-|-D-Ala. Also transpeptidation of peptidyl-alanyl moieties that are N-acyl substituents of D-alanine.. It participates in cell wall biogenesis; peptidoglycan biosynthesis. In terms of biological role, removes C-terminal D-alanyl residues from sugar-peptide cell wall precursors. The chain is D-alanyl-D-alanine carboxypeptidase from Streptomyces sp. (strain K15).